The chain runs to 299 residues: ATP phosphoribosyltransferase (299 aa).

It belongs to the ATP phosphoribosyltransferase family. Long subfamily. In terms of assembly, equilibrium between an active dimeric form, an inactive hexameric form and higher aggregates. Interconversion between the various forms is largely reversible and is influenced by the natural substrates and inhibitors of the enzyme. Mg(2+) is required as a cofactor.

It is found in the cytoplasm. It carries out the reaction 1-(5-phospho-beta-D-ribosyl)-ATP + diphosphate = 5-phospho-alpha-D-ribose 1-diphosphate + ATP. Its pathway is amino-acid biosynthesis; L-histidine biosynthesis; L-histidine from 5-phospho-alpha-D-ribose 1-diphosphate: step 1/9. Its activity is regulated as follows. Feedback inhibited by histidine. Functionally, catalyzes the condensation of ATP and 5-phosphoribose 1-diphosphate to form N'-(5'-phosphoribosyl)-ATP (PR-ATP). Has a crucial role in the pathway because the rate of histidine biosynthesis seems to be controlled primarily by regulation of HisG enzymatic activity. This chain is ATP phosphoribosyltransferase, found in Klebsiella pneumoniae (strain 342).